The primary structure comprises 445 residues: Inward rectifier potassium channel 4 (445 aa).

Residues 1–55 (MHGHNRNGQAHVPRRKRRNRFVKKNGQCNVYFANLSNKSQRYMADIFTTCVDTRW) lie on the Cytoplasmic side of the membrane. Residues 56–80 (RYMLMIFSAAFLVSWLFFGLLFWWI) traverse the membrane as a helical segment. Over 81–119 (AFFHGDLEASPSVPAVGGPGGNGGESPNAPKPCIMHVNG) the chain is Extracellular. Residues 120–131 (FLGAFLFSVETQ) constitute an intramembrane region (helical; Pore-forming). The segment at residues 132–138 (TTIGYGF) is an intramembrane region (pore-forming). A Selectivity filter motif is present at residues 133–138 (TIGYGF). Residues 139–147 (RCVTEECPL) are Extracellular-facing. The chain crosses the membrane as a helical span at residues 148 to 169 (AVIAVVVQSIVGCVIDSFMIGT). Topologically, residues 170-445 (IMAKMARPKK…NISYRRESRI (276 aa)) are cytoplasmic. A PDZ-binding motif is present at residues 443–445 (SRI).

The protein belongs to the inward rectifier-type potassium channel (TC 1.A.2.1) family. KCNJ4 subfamily. Homomultimeric and heteromultimeric association with KCNJ2 and KCNJ12. Interacts with DLG2 and DLG4. Associates, via its PDZ-recognition domain, with a complex containing LIN7A, LIN7B, LIN7C, DLG1, CASK and APBA1. Interacts with TAX1BP3. TAX1BP3 competes with LIN7 family members for KCNJ4 binding. As to expression, highly expressed in the forebrain, moderately in skeletal muscle. Im olfactory bulb, specifically expressed at the postsynaptic membrane of dendritic spines of granule cells.

Its subcellular location is the cell membrane. The protein resides in the postsynaptic cell membrane. The protein localises to the cytoplasmic vesicle membrane. It carries out the reaction K(+)(in) = K(+)(out). Inward rectifier potassium channels are characterized by a greater tendency to allow potassium to flow into the cell rather than out of it. Their voltage dependence is regulated by the concentration of extracellular potassium; as external potassium is raised, the voltage range of the channel opening shifts to more positive voltages. The inward rectification is mainly due to the blockage of outward current by internal magnesium. Can be blocked by extracellular barium and cesium. This Mus musculus (Mouse) protein is Inward rectifier potassium channel 4 (Kcnj4).